The sequence spans 179 residues: UPF0302 protein BLi02393/BL02764 (179 aa).

It belongs to the UPF0302 family.

The sequence is that of UPF0302 protein BLi02393/BL02764 from Bacillus licheniformis (strain ATCC 14580 / DSM 13 / JCM 2505 / CCUG 7422 / NBRC 12200 / NCIMB 9375 / NCTC 10341 / NRRL NRS-1264 / Gibson 46).